The sequence spans 530 residues: Bifunctional NAD(P)H-hydrate repair enzyme Nnr (530 aa).

An NAD(P)H-hydrate epimerase region spans residues 1–224 (MYLVTAAEMG…GIPQKLVATQ (224 aa)). The YjeF N-terminal domain occupies 9-222 (MGQLDRLASS…DIGIPQKLVA (214 aa)). The NADPHX 1; for epimerase activity stretch occupies residues 60 to 64 (NNGGD). Residues N61 and D132 each coordinate K(+). The segment at 136–142 (GTGFKGA) is NADPHX 1; for epimerase activity. Residue D165 participates in (6S)-NADPHX binding. S168 serves as a coordination point for K(+). A YjeF C-terminal domain is found at 232-515 (TAAWCRSQLP…DFLPYVLRNL (284 aa)). Positions 232–530 (TAAWCRSQLP…TIVAAGLGRD (299 aa)) are ADP-dependent (S)-NAD(P)H-hydrate dehydratase. G338 provides a ligand contact to (6S)-NADPHX. Residues 389 to 395 (HPGEMAR) form an NADPHX 2; for dehydratase activity region. ADP is bound by residues 426–430 (KGART) and 446–455 (NPGMATAGSG). D456 provides a ligand contact to (6S)-NADPHX.

In the N-terminal section; belongs to the NnrE/AIBP family. This sequence in the C-terminal section; belongs to the NnrD/CARKD family. K(+) is required as a cofactor.

The catalysed reaction is (6S)-NADHX + ADP = AMP + phosphate + NADH + H(+). The enzyme catalyses (6S)-NADPHX + ADP = AMP + phosphate + NADPH + H(+). It catalyses the reaction (6R)-NADHX = (6S)-NADHX. It carries out the reaction (6R)-NADPHX = (6S)-NADPHX. In terms of biological role, bifunctional enzyme that catalyzes the epimerization of the S- and R-forms of NAD(P)HX and the dehydration of the S-form of NAD(P)HX at the expense of ADP, which is converted to AMP. This allows the repair of both epimers of NAD(P)HX, a damaged form of NAD(P)H that is a result of enzymatic or heat-dependent hydration. This is Bifunctional NAD(P)H-hydrate repair enzyme Nnr (nnr) from Moorella thermoacetica (strain ATCC 39073 / JCM 9320).